Reading from the N-terminus, the 360-residue chain is Photosystem II protein D1 (360 aa).

The next 3 membrane-spanning stretches (helical) occupy residues 32-49, 121-136, and 145-159; these read YLGW…SATF, HFFI…EWEL, and WIFV…AASA. His-121 serves as a coordination point for chlorophyll a. Tyr-129 lines the pheophytin a pocket. Residues Asp-173 and Glu-192 each contribute to the [CaMn4O5] cluster site. A helical membrane pass occupies residues 200-221; it reads LHMFGVAAVFGGSLFSAMHGSL. Position 201 (His-201) interacts with chlorophyll a. A quinone-binding positions include His-218 and 267-268; that span reads SF. His-218 contacts Fe cation. His-275 is a binding site for Fe cation. The chain crosses the membrane as a helical span at residues 277–291; it reads FLGAWPVVGIWLTAM. 4 residues coordinate [CaMn4O5] cluster: His-335, Glu-336, Asp-345, and Ala-347. Positions 348-360 are excised as a propeptide; it reads CANCLLSLWPMVG.

The protein belongs to the reaction center PufL/M/PsbA/D family. In terms of assembly, PSII is composed of 1 copy each of membrane proteins PsbA, PsbB, PsbC, PsbD, PsbE, PsbF, PsbH, PsbI, PsbJ, PsbK, PsbL, PsbM, PsbT, PsbX, PsbY, PsbZ, Psb30/Ycf12, at least 3 peripheral proteins of the oxygen-evolving complex and a large number of cofactors. It forms dimeric complexes. Requires The D1/D2 heterodimer binds P680, chlorophylls that are the primary electron donor of PSII, and subsequent electron acceptors. It shares a non-heme iron and each subunit binds pheophytin, quinone, additional chlorophylls, carotenoids and lipids. D1 provides most of the ligands for the Mn4-Ca-O5 cluster of the oxygen-evolving complex (OEC). There is also a Cl(-1) ion associated with D1 and D2, which is required for oxygen evolution. The PSII complex binds additional chlorophylls, carotenoids and specific lipids. as cofactor. Tyr-164 forms a radical intermediate that is referred to as redox-active TyrZ, YZ or Y-Z. Post-translationally, C-terminally processed by CtpA; processing is essential to allow assembly of the oxygen-evolving complex and thus photosynthetic growth.

It is found in the plastid. Its subcellular location is the chloroplast thylakoid membrane. The enzyme catalyses 2 a plastoquinone + 4 hnu + 2 H2O = 2 a plastoquinol + O2. Functionally, photosystem II (PSII) is a light-driven water:plastoquinone oxidoreductase that uses light energy to abstract electrons from H(2)O, generating O(2) and a proton gradient subsequently used for ATP formation. It consists of a core antenna complex that captures photons, and an electron transfer chain that converts photonic excitation into a charge separation. The D1/D2 (PsbA/PsbD) reaction center heterodimer binds P680, the primary electron donor of PSII as well as several subsequent electron acceptors. The protein is Photosystem II protein D1 of Karenia mikimotoi (Red tide dinoflagellate).